We begin with the raw amino-acid sequence, 324 residues long: COP9 signalosome complex subunit 6 (324 aa).

Residues 38-171 (VALHPLVILN…VSVFESVIDI (134 aa)) enclose the MPN domain.

It belongs to the peptidase M67A family. CSN6 subfamily. In terms of assembly, component of the CSN complex, composed of COPS1/GPS1, COPS2, COPS3, COPS4, COPS5, COPS6, COPS7 (COPS7A or COPS7B), COPS8 and COPS9. In the complex, it probably interacts directly with COPS2, COPS4, COPS5, COPS7 (COPS7A or COPS7B) and COPS9. Interacts with the translation initiation factor EIF3S6. Interacts weakly with RBX1. Directly interacts with COP1 and 14-3-3 protein sigma/SFN. Interacts with ERCC6.

The protein resides in the cytoplasm. The protein localises to the nucleus. Its function is as follows. Component of the COP9 signalosome complex (CSN), a complex involved in various cellular and developmental processes. The CSN complex is an essential regulator of the ubiquitin (Ubl) conjugation pathway by mediating the deneddylation of the cullin subunits of SCF-type E3 ligase complexes, leading to decrease the Ubl ligase activity of SCF-type complexes such as SCF, CSA or DDB2. The complex is also involved in phosphorylation of p53/TP53, c-jun/JUN, IkappaBalpha/NFKBIA, ITPK1 and IRF8, possibly via its association with CK2 and PKD kinases. CSN-dependent phosphorylation of TP53 and JUN promotes and protects degradation by the Ubl system, respectively. Has some glucocorticoid receptor-responsive activity. Stabilizes COP1 through reducing COP1 auto-ubiquitination and decelerating COP1 turnover rate, hence regulates the ubiquitination of COP1 targets, including SFN. This chain is COP9 signalosome complex subunit 6 (Cops6), found in Mus musculus (Mouse).